A 117-amino-acid chain; its full sequence is Small ribosomal subunit protein bS6 (117 aa).

The protein belongs to the bacterial ribosomal protein bS6 family.

In terms of biological role, binds together with bS18 to 16S ribosomal RNA. In Trichodesmium erythraeum (strain IMS101), this protein is Small ribosomal subunit protein bS6.